A 409-amino-acid chain; its full sequence is F-box/kelch-repeat protein At1g48625 (409 aa).

Residues 2–49 (ATMISNLPRDLMEEILSRVPLKSMRAVRLTCKNWHTLSITISESLAKM) form the F-box domain. Kelch repeat units follow at residues 169–218 (FIDY…LKGN) and 221–266 (WCAR…ILSC).

In Arabidopsis thaliana (Mouse-ear cress), this protein is F-box/kelch-repeat protein At1g48625.